The primary structure comprises 290 residues: uncharacterized protein (290 aa).

Residues 153–178 (EMVPITTSSTTPRSKGDEATSTGAFP) are disordered. Over residues 157 to 178 (ITTSSTTPRSKGDEATSTGAFP) the composition is skewed to polar residues. Residues 202 to 222 (LIAVTLLLGGAAIIVFVIFEV) traverse the membrane as a helical segment. Positions 246–276 (KEEDQKPGTTESQLDSQPEKVKHNVPNSSDS) are disordered. Residues 252 to 261 (PGTTESQLDS) show a composition bias toward polar residues.

It is found in the membrane. This is an uncharacterized protein from Mus musculus (Mouse).